The chain runs to 127 residues: Protein ApaG (127 aa).

Residues 3–127 (KTSIPDFQIT…FYLIAPLALH (125 aa)) form the ApaG domain.

This is Protein ApaG from Bdellovibrio bacteriovorus (strain ATCC 15356 / DSM 50701 / NCIMB 9529 / HD100).